A 417-amino-acid polypeptide reads, in one-letter code: Serine hydroxymethyltransferase (417 aa).

Residues leucine 121 and 125–127 contribute to the (6S)-5,6,7,8-tetrahydrofolate site; that span reads GHL. Position 229 is an N6-(pyridoxal phosphate)lysine (lysine 229). 355-357 provides a ligand contact to (6S)-5,6,7,8-tetrahydrofolate; it reads SPF.

The protein belongs to the SHMT family. In terms of assembly, homodimer. Pyridoxal 5'-phosphate is required as a cofactor.

Its subcellular location is the cytoplasm. It carries out the reaction (6R)-5,10-methylene-5,6,7,8-tetrahydrofolate + glycine + H2O = (6S)-5,6,7,8-tetrahydrofolate + L-serine. It functions in the pathway one-carbon metabolism; tetrahydrofolate interconversion. The protein operates within amino-acid biosynthesis; glycine biosynthesis; glycine from L-serine: step 1/1. Functionally, catalyzes the reversible interconversion of serine and glycine with tetrahydrofolate (THF) serving as the one-carbon carrier. This reaction serves as the major source of one-carbon groups required for the biosynthesis of purines, thymidylate, methionine, and other important biomolecules. Also exhibits THF-independent aldolase activity toward beta-hydroxyamino acids, producing glycine and aldehydes, via a retro-aldol mechanism. The protein is Serine hydroxymethyltransferase of Salmonella schwarzengrund (strain CVM19633).